We begin with the raw amino-acid sequence, 233 residues long: Large ribosomal subunit protein uL1 (233 aa).

This sequence belongs to the universal ribosomal protein uL1 family. As to quaternary structure, part of the 50S ribosomal subunit.

Its function is as follows. Binds directly to 23S rRNA. The L1 stalk is quite mobile in the ribosome, and is involved in E site tRNA release. In terms of biological role, protein L1 is also a translational repressor protein, it controls the translation of the L11 operon by binding to its mRNA. The chain is Large ribosomal subunit protein uL1 from Shewanella sp. (strain ANA-3).